The chain runs to 134 residues: Profilin-2 (134 aa).

Cysteine 13 and cysteine 118 are oxidised to a cystine. Positions 84 to 100 match the Involved in PIP2 interaction motif; that stretch reads AVIRGKKGSGGITIKKT. Threonine 114 is subject to Phosphothreonine.

This sequence belongs to the profilin family. As to quaternary structure, occurs in many kinds of cells as a complex with monomeric actin in a 1:1 ratio. In terms of processing, phosphorylated by MAP kinases.

The protein localises to the cytoplasm. It is found in the cytoskeleton. In terms of biological role, binds to actin and affects the structure of the cytoskeleton. At high concentrations, profilin prevents the polymerization of actin, whereas it enhances it at low concentrations. This chain is Profilin-2, found in Olea europaea (Common olive).